The following is a 98-amino-acid chain: Protein Asterix (98 aa).

2 helical membrane-spanning segments follow: residues 32–52 (LFSI…CLWV) and 78–98 (VSLS…NLFV).

Belongs to the Asterix family.

The protein resides in the membrane. The protein is Protein Asterix of Dictyostelium discoideum (Social amoeba).